We begin with the raw amino-acid sequence, 179 residues long: Large ribosomal subunit protein uL6 (179 aa).

Belongs to the universal ribosomal protein uL6 family. In terms of assembly, part of the 50S ribosomal subunit.

In terms of biological role, this protein binds to the 23S rRNA, and is important in its secondary structure. It is located near the subunit interface in the base of the L7/L12 stalk, and near the tRNA binding site of the peptidyltransferase center. The chain is Large ribosomal subunit protein uL6 from Mycobacteroides abscessus (strain ATCC 19977 / DSM 44196 / CCUG 20993 / CIP 104536 / JCM 13569 / NCTC 13031 / TMC 1543 / L948) (Mycobacterium abscessus).